Consider the following 147-residue polypeptide: UPF0306 protein YE0465 (147 aa).

This sequence belongs to the UPF0306 family.

The polypeptide is UPF0306 protein YE0465 (Yersinia enterocolitica serotype O:8 / biotype 1B (strain NCTC 13174 / 8081)).